Reading from the N-terminus, the 48-residue chain is Large ribosomal subunit protein bL33A (48 aa).

The protein belongs to the bacterial ribosomal protein bL33 family.

This chain is Large ribosomal subunit protein bL33A, found in Exiguobacterium sibiricum (strain DSM 17290 / CCUG 55495 / CIP 109462 / JCM 13490 / 255-15).